The sequence spans 247 residues: Large ribosomal subunit protein uL24m (247 aa).

The region spanning 84-117 is the KOW domain; sequence FFRGDRIEVLVGKDKGKQGIVTQVIPERNWVIVE.

Belongs to the universal ribosomal protein uL24 family. In terms of assembly, component of the mitochondrial ribosome large subunit (39S) which comprises a 16S rRNA and about 50 distinct proteins.

It localises to the mitochondrion. The polypeptide is Large ribosomal subunit protein uL24m (mRpL24) (Drosophila pseudoobscura pseudoobscura (Fruit fly)).